We begin with the raw amino-acid sequence, 310 residues long: Cytochrome f (310 aa).

An N-terminal signal peptide occupies residues 1–26 (MNIKLTLLVLISIINLMIIQPIQTLA). Heme-binding residues include Phe27, Cys47, Cys50, and His51. Residues 276–296 (IKGMIVFFFTVTIAQIFFVLK) traverse the membrane as a helical segment.

This sequence belongs to the cytochrome f family. The 4 large subunits of the cytochrome b6-f complex are cytochrome b6, subunit IV (17 kDa polypeptide, petD), cytochrome f and the Rieske protein, while the 4 small subunits are PetG, PetL, PetM and PetN. The complex functions as a dimer. Requires heme as cofactor.

The protein localises to the plastid. Its subcellular location is the chloroplast thylakoid membrane. In terms of biological role, component of the cytochrome b6-f complex, which mediates electron transfer between photosystem II (PSII) and photosystem I (PSI), cyclic electron flow around PSI, and state transitions. The protein is Cytochrome f of Gracilaria tenuistipitata var. liui (Red alga).